Here is a 191-residue protein sequence, read N- to C-terminus: Small ribosomal subunit protein uS10c (191 aa).

The transit peptide at 1 to 56 (MAVSTVSSFLLPSFGIPSSSPSSTRLKVSLLPSSSTHGGLSSCVLTKPSVSLTKVF) directs the protein to the chloroplast.

Belongs to the universal ribosomal protein uS10 family. Part of the 30S ribosomal subunit.

Its subcellular location is the plastid. The protein resides in the chloroplast. The polypeptide is Small ribosomal subunit protein uS10c (RPS10) (Arabidopsis thaliana (Mouse-ear cress)).